The primary structure comprises 620 residues: Chaperone protein DnaK (620 aa).

A Phosphothreonine; by autocatalysis modification is found at T174. The tract at residues 590–620 is disordered; that stretch reads AAGAGPDMSGAGPQGDTYAGDDVVDGDYREV.

This sequence belongs to the heat shock protein 70 family.

Its function is as follows. Acts as a chaperone. The protein is Chaperone protein DnaK of Lachnoclostridium phytofermentans (strain ATCC 700394 / DSM 18823 / ISDg) (Clostridium phytofermentans).